Consider the following 33-residue polypeptide: MSDINATRLPIILAPIIPCINDDVNSTLTSGER.

A propeptide spanning residues 1–10 is cleaved from the precursor; it reads MSDINATRLP. The cyclopeptide (Ile-Pro) cross-link spans 11–18; it reads IILAPIIP. Residues 19-33 constitute a propeptide that is removed on maturation; it reads CINDDVNSTLTSGER.

It belongs to the MSDIN fungal toxin family. Post-translationally, processed by the macrocyclase-peptidase enzyme POPB to yield a toxic cyclic octapeptide. POPB first removes 10 residues from the N-terminus. Conformational trapping of the remaining peptide forces the enzyme to release this intermediate rather than proceed to macrocyclization. The enzyme rebinds the remaining peptide in a different conformation and catalyzes macrocyclization of the N-terminal 8 residues.

Functionally, probable toxin that belongs to the MSDIN-like toxin family responsible for a large number of food poisoning cases and deaths. This chain is MSDIN-like toxin proprotein 2, found in Amanita phalloides (Death cap).